The primary structure comprises 848 residues: ATP-dependent Clp protease ATP-binding subunit ClpC1 (848 aa).

One can recognise a Clp R domain in the interval 2-144 (FERFTDRARR…RQQVIQLLSG (143 aa)). Repeat stretches follow at residues 5–70 (FTDR…IGQG) and 80–144 (FTPR…LLSG). In terms of domain architecture, UVR spans 425–460 (DEKIADARREKESAIDAQDFEKAAALRDKEKQLVAQ). ATP is bound by residues 553 to 560 (GPSGVGKT) and 617 to 626 (KPFSVVLFDE). A disordered region spans residues 811 to 848 (GQGEDAKFTFSGGPKRAETAEPDLAGAGAAGAPTAGTE). Residues 835-848 (AGAGAAGAPTAGTE) are compositionally biased toward low complexity.

The protein belongs to the ClpA/ClpB family. ClpC subfamily.

Functionally, ATP-dependent specificity component of the Clp protease. It directs the protease to specific substrates. Can perform chaperone functions in the absence of ClpP. Degrades anti-sigma-E factor RseA in the presence of ClpP2. This chain is ATP-dependent Clp protease ATP-binding subunit ClpC1 (clpC1), found in Mycolicibacterium smegmatis (strain ATCC 700084 / mc(2)155) (Mycobacterium smegmatis).